Reading from the N-terminus, the 822-residue chain is Ras GTPase-activating-like protein rgaA (822 aa).

Residues 1-36 form a disordered region; the sequence is MNKEEYSDISDSESEEVHETNNHNEHEHEEEDDTPE. Over residues 15-27 the composition is skewed to basic and acidic residues; it reads EEVHETNNHNEHE. Residues 104 to 152 are a coiled coil; that stretch reads EDKESDWIAEIQELKRNLVSEVRRNHTLERDLNRLDKRIALLIKNRGNI. Positions 161-822 are required for interaction to rac1A; the sequence is GLKAPKHKGD…IHLLNKLFLY (662 aa). Residues 234–477 enclose the Ras-GAP domain; the sequence is FLLLSLYRLS…GDIKNYLQEI (244 aa).

As to quaternary structure, heterotetramer. Quaternary complex with activated rac1A, ctxA and ctxB. Interacts directly with rac1A and ctxA. Preferentially interacts with activated forms of rac1A, rac1B and rac1C. Interacts with racE.

It localises to the cytoplasm. The protein localises to the cell cortex. Its subcellular location is the cleavage furrow. In terms of biological role, part of signaling pathway that is required for completion of cytokinesis. gapA and rgaA control cortexillin localization to the cleavage furrow and hence may be involved in cleavage of the midbody in the final stage of cytokinesis by regulating the actin cytoskeleton. Forms a complex by linking activated rac1A to ctxA. Assembly of this complex is necessary for the recruitment of cortexillin to the midzone of a dividing cell. Overexpression leads to the suppression of the formation of cellular projections containing F-actin and to a defect in cytokinesis. In Dictyostelium discoideum (Social amoeba), this protein is Ras GTPase-activating-like protein rgaA (rgaA).